Consider the following 147-residue polypeptide: Transcriptional regulator FurA (147 aa).

The DNA-binding stretch occupies residues 1 to 85 (MSSIPDYAEQ…GSVARYESRV (85 aa)). Zn(2+) is bound by residues His34 and Glu82. The tract at residues 86–147 (GDNHHHIVCR…SISDTSRSHP (62 aa)) is dimerization. Residues Asp87 and His89 each coordinate Fe cation. 4 residues coordinate Zn(2+): His91, Cys94, Cys97, and Asp102. Glu109 contributes to the Fe cation binding site.

Belongs to the Fur family. As to quaternary structure, homodimer.

Its subcellular location is the cytoplasm. Represses transcription of the catalase-peroxidase gene katG and its own transcription by binding to the promoter region in a redox-dependent manner. The protein is Transcriptional regulator FurA (furA) of Mycobacterium bovis (strain ATCC BAA-935 / AF2122/97).